The chain runs to 312 residues: uncharacterized protein (312 aa).

Helical transmembrane passes span 4–24 and 286–306; these read AIYLLILCIFGLFSVYFTYAE and YLLSFIGIIIGFGIIGLAIYL.

Its subcellular location is the cell membrane. This is an uncharacterized protein from Methanocaldococcus jannaschii (strain ATCC 43067 / DSM 2661 / JAL-1 / JCM 10045 / NBRC 100440) (Methanococcus jannaschii).